The sequence spans 419 residues: 4-hydroxyphenylpyruvate dioxygenase (419 aa).

2 VOC domains span residues 37 to 185 and 216 to 376; these read GYDH…LLSR and RIDH…LFTR. His219, His302, and Glu387 together coordinate Fe cation.

The protein belongs to the 4HPPD family. The cofactor is Fe cation.

It carries out the reaction 3-(4-hydroxyphenyl)pyruvate + O2 = homogentisate + CO2. The protein operates within amino-acid degradation; L-phenylalanine degradation; acetoacetate and fumarate from L-phenylalanine: step 3/6. The chain is 4-hydroxyphenylpyruvate dioxygenase (HPD4) from Pyricularia oryzae (strain 70-15 / ATCC MYA-4617 / FGSC 8958) (Rice blast fungus).